Reading from the N-terminus, the 98-residue chain is Aspartyl/glutamyl-tRNA(Asn/Gln) amidotransferase subunit C (98 aa).

The segment at 76–98 is disordered; the sequence is QVLSGAPDAEDGRFKVPAILEED.

The protein belongs to the GatC family. Heterotrimer of A, B and C subunits.

The catalysed reaction is L-glutamyl-tRNA(Gln) + L-glutamine + ATP + H2O = L-glutaminyl-tRNA(Gln) + L-glutamate + ADP + phosphate + H(+). It carries out the reaction L-aspartyl-tRNA(Asn) + L-glutamine + ATP + H2O = L-asparaginyl-tRNA(Asn) + L-glutamate + ADP + phosphate + 2 H(+). In terms of biological role, allows the formation of correctly charged Asn-tRNA(Asn) or Gln-tRNA(Gln) through the transamidation of misacylated Asp-tRNA(Asn) or Glu-tRNA(Gln) in organisms which lack either or both of asparaginyl-tRNA or glutaminyl-tRNA synthetases. The reaction takes place in the presence of glutamine and ATP through an activated phospho-Asp-tRNA(Asn) or phospho-Glu-tRNA(Gln). The sequence is that of Aspartyl/glutamyl-tRNA(Asn/Gln) amidotransferase subunit C from Renibacterium salmoninarum (strain ATCC 33209 / DSM 20767 / JCM 11484 / NBRC 15589 / NCIMB 2235).